The sequence spans 77 residues: Large ribosomal subunit protein eL20 (77 aa).

It belongs to the eukaryotic ribosomal protein eL20 family. In terms of assembly, part of the 50S ribosomal subunit. Binds 23S rRNA.

The sequence is that of Large ribosomal subunit protein eL20 from Pyrococcus abyssi (strain GE5 / Orsay).